A 474-amino-acid polypeptide reads, in one-letter code: MDYLPIFLKLRDLPCLIVGGGEVAVRKLGLLLDAGAAVTVIAASAEAVIVELADRGLIRLRTKVFEATDSEGFRLIIAATDDRAVNAAVATAARRHGIPVNVVDCPDLCDFIFPAIIDRSPVLVAVSTGGASPVLARQLRTRIETCIPSRFGTLARLAADLRERVRQAIPEPRARRHFWERTLEGPAAELALQGRAEDAERVLLEAADAAARQERPAWGSVALVGAGPGDPDLLTLRALRLIQEADVIVYDRLVSAEILALARRDARRIYAGKERSRHSIPQDDINALLANLAAEGNRVVRLKGGDPFIFGRGGEEIETLMACGIPFQVVPGITAASGCAAYAGIPLTHRAHAHACVFVAGHLKDGTLQDLDWSQLVQPHQTVVVYMGLQGLPQICAELIRHGAPPSRPAALIQQGTTRDQKVLTATLETLPDKVADAGIKAPTLIIIGEVVGLRKKLAWYRSRQETEGRSGNG.

Residues 1 to 203 (MDYLPIFLKL…GRAEDAERVL (203 aa)) are precorrin-2 dehydrogenase /sirohydrochlorin ferrochelatase. NAD(+)-binding positions include 22-23 (EV) and 43-44 (AS). The tract at residues 219 to 474 (GSVALVGAGP…QETEGRSGNG (256 aa)) is uroporphyrinogen-III C-methyltransferase. Residue P228 coordinates S-adenosyl-L-methionine. D251 serves as the catalytic Proton acceptor. K273 (proton donor) is an active-site residue. Residues 304–306 (GGD), I309, 334–335 (TA), M387, and G416 each bind S-adenosyl-L-methionine.

The protein in the N-terminal section; belongs to the precorrin-2 dehydrogenase / sirohydrochlorin ferrochelatase family. This sequence in the C-terminal section; belongs to the precorrin methyltransferase family.

It catalyses the reaction uroporphyrinogen III + 2 S-adenosyl-L-methionine = precorrin-2 + 2 S-adenosyl-L-homocysteine + H(+). The catalysed reaction is precorrin-2 + NAD(+) = sirohydrochlorin + NADH + 2 H(+). It carries out the reaction siroheme + 2 H(+) = sirohydrochlorin + Fe(2+). Its pathway is cofactor biosynthesis; adenosylcobalamin biosynthesis; precorrin-2 from uroporphyrinogen III: step 1/1. The protein operates within cofactor biosynthesis; adenosylcobalamin biosynthesis; sirohydrochlorin from precorrin-2: step 1/1. It participates in porphyrin-containing compound metabolism; siroheme biosynthesis; precorrin-2 from uroporphyrinogen III: step 1/1. It functions in the pathway porphyrin-containing compound metabolism; siroheme biosynthesis; siroheme from sirohydrochlorin: step 1/1. Its pathway is porphyrin-containing compound metabolism; siroheme biosynthesis; sirohydrochlorin from precorrin-2: step 1/1. Functionally, multifunctional enzyme that catalyzes the SAM-dependent methylations of uroporphyrinogen III at position C-2 and C-7 to form precorrin-2 via precorrin-1. Then it catalyzes the NAD-dependent ring dehydrogenation of precorrin-2 to yield sirohydrochlorin. Finally, it catalyzes the ferrochelation of sirohydrochlorin to yield siroheme. The chain is Siroheme synthase from Methylococcus capsulatus (strain ATCC 33009 / NCIMB 11132 / Bath).